The chain runs to 556 residues: PTS system fructose-specific EIIB'BC component (556 aa).

PTS EIIB type-2 domains are found at residues 1–85 and 106–201; these read MKLF…LANG and IVAV…KAFK. Catalysis depends on Cys112, which acts as the Phosphocysteine intermediate; for EIIB activity. At Cys112 the chain carries Phosphocysteine; by EIIA. Positions 224 to 556 constitute a PTS EIIC type-2 domain; it reads VYKHLMTGVS…AIIKSKNNAE (333 aa). The next 10 membrane-spanning stretches (helical) occupy residues 237–257, 275–295, 302–322, 324–344, 349–369, 390–410, 431–451, 468–488, 490–510, and 529–549; these read PLVV…FNVI, SGVA…FSIA, VGLI…GGII, GFLA…PASL, PILI…IYLI, VNAI…MGGP, MAAA…ATWI, FVLG…ADPI, VIIS…GLNI, and LKYL…YAII.

It is found in the cell inner membrane. The catalysed reaction is D-fructose(out) + N(pros)-phospho-L-histidyl-[protein] = D-fructose 1-phosphate(in) + L-histidyl-[protein]. The phosphoenolpyruvate-dependent sugar phosphotransferase system (sugar PTS), a major carbohydrate active transport system, catalyzes the phosphorylation of incoming sugar substrates concomitantly with their translocation across the cell membrane. The enzyme II FruAB PTS system is involved in fructose transport. This is PTS system fructose-specific EIIB'BC component from Haemophilus influenzae (strain ATCC 51907 / DSM 11121 / KW20 / Rd).